A 526-amino-acid chain; its full sequence is Acid-sensing ion channel 1 (526 aa).

Residues 1-49 (MELKTEEEEVGGVQPVSIQAFASSSTLHGLAHIFSYERLSLKRALWALC) are Cytoplasmic-facing. The helical transmembrane segment at 50–66 (FLGSLAVLLCVCTERVQ) threads the bilayer. At 67 to 425 (YYFCYHHVTK…ETIEQKKAYE (359 aa)) the chain is on the extracellular side. Intrachain disulfides connect C93-C194, C172-C179, C290-C365, C308-C361, C312-C359, C321-C343, and C323-C335. Residues N366 and N393 are each glycosylated (N-linked (GlcNAc...) asparagine). The discontinuously helical transmembrane segment at 426–456 (IAGLLGDIGGQMGLFIGASILTVLELFDYAY) threads the bilayer. The GAS motif; ion selectivity filter motif lies at 442–444 (GAS). Over 457-526 (EVIKHRLCRR…ARGTFEDFTC (70 aa)) the chain is Cytoplasmic. Phosphoserine occurs at positions 477 and 497.

The protein belongs to the amiloride-sensitive sodium channel (TC 1.A.6) family. ASIC1 subfamily. As to quaternary structure, homotrimer. Heterotrimer; with other ASIC proteins producing channel with different properties. Interacts with PICK1; regulates ASIC1 clustering in membranes. Interacts with STOM; alters heterotrimeric ASIC channels activity. Post-translationally, pH-gating could be regulated by serine proteases. Phosphorylation by PKA regulates interaction with PICK1 and subcellular localization. Phosphorylation by PKC may regulate the channel. As to expression, expressed in dorsal root ganglia and sciatic nerve (at protein level). Widely distributed throughout the brain. Expressed in olfactory bulb, neo and allocortical regions, dentate granule cells, pyramidal cells of CA1-CA3 subfields of the hippocampal formation, habenula, basolateral amygdaloid nuclei, and in the Purkinje and granule cells of the cerebellum. Diffusely detected over most other regions of the basal ganglia, including thalamic nuclei, substantia nigra, striatum and globus pallidus, hypothalamus, midbrain, pons, medulla and choroid plexus. Expressed only in dorsal root ganglion (DRG). In terms of tissue distribution, expressed exclusively in trigeminal ganglion and dorsal root ganglion.

It is found in the cell membrane. The protein localises to the postsynaptic cell membrane. The protein resides in the cell projection. It localises to the dendrite. The catalysed reaction is Na(+)(in) = Na(+)(out). It carries out the reaction Li(+)(in) = Li(+)(out). It catalyses the reaction K(+)(in) = K(+)(out). The enzyme catalyses Ca(2+)(in) = Ca(2+)(out). The catalysed reaction is H(+)(in) = H(+)(out). With respect to regulation, inhibited by the diuretic drug amiloride. External calcium is required to potentiate proton activation of ASIC1 at physiological concentrations, but at higher, non-physiological concentrations, it inhibits activation. Also potentiated by other multivalent cations like Mg(2+), Ba(2+). Activated by FMRFamide-related neuropeptides. Inhibited by anti-inflammatory drugs like salicylic acid. The spider venom psalmotoxin-1 specifically inhibits the ASIC1 homotrimer. The snake venom mambalgin-1, mambalgin-2 and mambalgin-3 inhibit the homotrimer of Asic1a (ASIC1 isoform 1). The snake venom mambalgin-1 and mambalgin-2 inhibit heterotrimers of Asic1a-Asic1b (ASIC1 isoform 1-ASIC1 isoform 3). Heterotrimer of Asic1a-Asic2a is inhibited by the snake venom mambalgin-1, mambalgin-2 and mambalgin-3. Heterotrimer of Asic1a-Asic2b is inhibited by the snake venom mambalgin-1 and mambalgin-2. The spider venom Pi-theraphotoxin-Hm3a inhibits the homotrimer of Asic1a (ASIC1 isoform 1). The spider venom Pi-theraphotoxin-Hm3a inhibits heterotrimers of Asic1a-Asic1b (ASIC1 isoform 1-ASIC1 isoform 3). The spider venom Pi-hexatoxin-Hi1a inhibits the ASIC1 homotrimer. Its activity is regulated as follows. Not inhibited by extracellular calcium. Forms voltage-independent, pH-gated trimeric sodium channels that act as postsynaptic excitatory receptors in the nervous system, playing a crucial role in regulating synaptic plasticity, learning, and memory. Upon extracellular pH drop this channel elicits transient, fast activating, and completely desensitizing inward currents. Displays high selectivity for sodium ions but can also permit the permeation of other cations. Regulates more or less directly intracellular calcium concentration and CaMKII phosphorylation, and thereby the density of dendritic spines. Modulates neuronal activity in the circuits underlying innate fear. In terms of biological role, permeable to other cations including calcium, lithium and potassium. Functionally, pH activation and steady-state inactivation are shifted to more acidic values. Forms channels that are not permeable to calcium as it discrimates stronger between monovalent cations. Its function is as follows. Has no pH-gated sodium channel activity per se but can associate with other ASICs and regulate their pH-sensitivity. The protein is Acid-sensing ion channel 1 of Rattus norvegicus (Rat).